We begin with the raw amino-acid sequence, 227 residues long: Translation initiation factor 6 (227 aa).

Belongs to the eIF-6 family.

In terms of biological role, binds to the 50S ribosomal subunit and prevents its association with the 30S ribosomal subunit to form the 70S initiation complex. The polypeptide is Translation initiation factor 6 (Methanococcus maripaludis (strain C6 / ATCC BAA-1332)).